Here is a 163-residue protein sequence, read N- to C-terminus: Phosphopantetheine adenylyltransferase (163 aa).

Position 10 (Ser10) interacts with substrate. Residues Ser10–Phe11 and His18 contribute to the ATP site. Substrate contacts are provided by Lys42, Leu74, and Arg88. ATP contacts are provided by residues Gly89–Arg91, Glu99, and Tyr124–Ser130.

Belongs to the bacterial CoaD family. Homohexamer. It depends on Mg(2+) as a cofactor.

It is found in the cytoplasm. It carries out the reaction (R)-4'-phosphopantetheine + ATP + H(+) = 3'-dephospho-CoA + diphosphate. It participates in cofactor biosynthesis; coenzyme A biosynthesis; CoA from (R)-pantothenate: step 4/5. Reversibly transfers an adenylyl group from ATP to 4'-phosphopantetheine, yielding dephospho-CoA (dPCoA) and pyrophosphate. The sequence is that of Phosphopantetheine adenylyltransferase from Bacillus mycoides (strain KBAB4) (Bacillus weihenstephanensis).